A 156-amino-acid polypeptide reads, in one-letter code: ATP synthase subunit b (156 aa).

Residues 5 to 27 traverse the membrane as a helical segment; that stretch reads ITLIGQMITFAIFVGFTMKFVWP.

It belongs to the ATPase B chain family. In terms of assembly, F-type ATPases have 2 components, F(1) - the catalytic core - and F(0) - the membrane proton channel. F(1) has five subunits: alpha(3), beta(3), gamma(1), delta(1), epsilon(1). F(0) has three main subunits: a(1), b(2) and c(10-14). The alpha and beta chains form an alternating ring which encloses part of the gamma chain. F(1) is attached to F(0) by a central stalk formed by the gamma and epsilon chains, while a peripheral stalk is formed by the delta and b chains.

It is found in the cell inner membrane. Its function is as follows. F(1)F(0) ATP synthase produces ATP from ADP in the presence of a proton or sodium gradient. F-type ATPases consist of two structural domains, F(1) containing the extramembraneous catalytic core and F(0) containing the membrane proton channel, linked together by a central stalk and a peripheral stalk. During catalysis, ATP synthesis in the catalytic domain of F(1) is coupled via a rotary mechanism of the central stalk subunits to proton translocation. Functionally, component of the F(0) channel, it forms part of the peripheral stalk, linking F(1) to F(0). This Francisella tularensis subsp. tularensis (strain WY96-3418) protein is ATP synthase subunit b.